Consider the following 213-residue polypeptide: Thymidylate kinase (213 aa).

Gly10–Thr17 provides a ligand contact to ATP.

This sequence belongs to the thymidylate kinase family.

The enzyme catalyses dTMP + ATP = dTDP + ADP. Functionally, phosphorylation of dTMP to form dTDP in both de novo and salvage pathways of dTTP synthesis. This chain is Thymidylate kinase, found in Klebsiella pneumoniae (strain 342).